Reading from the N-terminus, the 65-residue chain is Large ribosomal subunit protein bL35 (65 aa).

The interval 1–47 is disordered; sequence MPKIKTNRGAAKRFRKTASGKIKRNSAFTSHILTSKTRKRKRQLRSS. Residues 10 to 24 show a composition bias toward basic residues; that stretch reads AAKRFRKTASGKIKR. A compositionally biased stretch (polar residues) spans 26–35; sequence SAFTSHILTS.

This sequence belongs to the bacterial ribosomal protein bL35 family.

The sequence is that of Large ribosomal subunit protein bL35 from Geobacter metallireducens (strain ATCC 53774 / DSM 7210 / GS-15).